The primary structure comprises 141 residues: MAKKIVAVIKLALQAGKANPAPPVGPALGQHGVNIMAFCKEYNAKTQDKAGFVIPVEISVFEDRSFTFITKTPPASVLITKAAGIEKGSGDSAKGQVGTINRAQLEEIAKTKLPDLNCSNIESAMRVIEGTARNMGVSVKD.

The protein belongs to the universal ribosomal protein uL11 family. As to quaternary structure, part of the ribosomal stalk of the 50S ribosomal subunit. Interacts with L10 and the large rRNA to form the base of the stalk. L10 forms an elongated spine to which L12 dimers bind in a sequential fashion forming a multimeric L10(L12)X complex. Post-translationally, one or more lysine residues are methylated.

Functionally, forms part of the ribosomal stalk which helps the ribosome interact with GTP-bound translation factors. The protein is Large ribosomal subunit protein uL11 of Prochlorococcus marinus (strain MIT 9211).